The primary structure comprises 388 residues: Dauer abnormal formation protein 25 (388 aa).

ANK repeat units lie at residues serine 40–aspartate 69, threonine 74–leucine 103, and isoleucine 107–glutamate 137. Zn(2+) contacts are provided by cysteine 321, cysteine 324, cysteine 333, cysteine 336, cysteine 341, cysteine 345, histidine 353, and cysteine 357. The MYND-type zinc-finger motif lies at cysteine 321–cysteine 357.

Expressed in many ciliated sensory neurons.

The protein resides in the cell projection. It localises to the cilium. Functionally, may be involved in the trafficking and dendritic transport of signaling proteins, such as the receptor-type guanylate cyclases gcy-12 and daf-11, to the cilia. In ciliated sensory neurons, required for the calcium flux to the cytoplasm in response to onset and removal of a nitric oxide (NO) stimulus and is thereby required for the behavioral avoidance response to NO-producing organisms like P.aeruginosa. The chain is Dauer abnormal formation protein 25 (daf-25) from Caenorhabditis elegans.